We begin with the raw amino-acid sequence, 519 residues long: Xylose import ATP-binding protein XylG (519 aa).

2 consecutive ABC transporter domains span residues Met-6–Glu-245 and Phe-262–Val-507. Gly-38–Ser-45 is a binding site for ATP.

It belongs to the ABC transporter superfamily. Xylose importer (TC 3.A.1.2.4) family. The complex is composed of two ATP-binding proteins (XylG), two transmembrane proteins (XylH) and a solute-binding protein (XylF).

The protein resides in the cell inner membrane. The enzyme catalyses D-xylose(out) + ATP + H2O = D-xylose(in) + ADP + phosphate + H(+). In terms of biological role, part of the ABC transporter complex XylFGH involved in xylose import. Responsible for energy coupling to the transport system. The polypeptide is Xylose import ATP-binding protein XylG (Paraburkholderia xenovorans (strain LB400)).